The following is a 224-amino-acid chain: Deoxyribose-phosphate aldolase (224 aa).

Catalysis depends on D92, which acts as the Proton donor/acceptor. K154 acts as the Schiff-base intermediate with acetaldehyde in catalysis. K183 (proton donor/acceptor) is an active-site residue.

The protein belongs to the DeoC/FbaB aldolase family. DeoC type 1 subfamily.

The protein resides in the cytoplasm. It catalyses the reaction 2-deoxy-D-ribose 5-phosphate = D-glyceraldehyde 3-phosphate + acetaldehyde. It functions in the pathway carbohydrate degradation; 2-deoxy-D-ribose 1-phosphate degradation; D-glyceraldehyde 3-phosphate and acetaldehyde from 2-deoxy-alpha-D-ribose 1-phosphate: step 2/2. Its function is as follows. Catalyzes a reversible aldol reaction between acetaldehyde and D-glyceraldehyde 3-phosphate to generate 2-deoxy-D-ribose 5-phosphate. The protein is Deoxyribose-phosphate aldolase of Actinobacillus succinogenes (strain ATCC 55618 / DSM 22257 / CCUG 43843 / 130Z).